The primary structure comprises 37 residues: Large ribosomal subunit protein bL36 (37 aa).

The protein belongs to the bacterial ribosomal protein bL36 family.

The polypeptide is Large ribosomal subunit protein bL36 (Mycoplasma genitalium (strain ATCC 33530 / DSM 19775 / NCTC 10195 / G37) (Mycoplasmoides genitalium)).